The sequence spans 51 residues: Lantibiotic lacticin-481 (51 aa).

Positions 1–24 are excised as a propeptide; the sequence is MKEQNSFNLLQEVTESELDLILGA. The beta-methyllanthionine (Thr-Cys) cross-link spans 33 to 38; the sequence is TISHEC. 2 cross-links (lanthionine (Ser-Cys)) span residues 35-49 and 42-50; these read SHEC…VFTC and SWQFVFTCC. (Z)-2,3-didehydrobutyrine is present on threonine 48.

The protein belongs to the type A lantibiotic family. In terms of assembly, monomer or homodimer. Maturation of lantibiotics involves the enzymatic conversion of Thr, and Ser into dehydrated AA and the formation of thioether bonds with cysteine. This is followed by membrane translocation and cleavage of the modified precursor. In terms of processing, it is established that the 2,3-didehydrobutyrine is the Z-isomer.

Lanthionine-containing peptide antibiotic (lantibiotic) active on Gram-positive bacteria. The bactericidal activity of lantibiotics is based on depolarization of energized bacterial cytoplasmic membranes, initiated by the formation of aqueous transmembrane pores. Lacticin 481 is a broad spectrum bacteriocin exhibiting activity against a wide range of lactic acid bacteria and C.tyrobutyricum. The polypeptide is Lantibiotic lacticin-481 (lctA) (Lactococcus lactis subsp. lactis (Streptococcus lactis)).